The sequence spans 325 residues: Pyruvate dehydrogenase E1 component subunit beta (325 aa).

Glu60 contributes to the thiamine diphosphate binding site.

In terms of assembly, heterodimer of an alpha and a beta chain. Thiamine diphosphate serves as cofactor.

The protein localises to the cytoplasm. Its subcellular location is the secreted. The catalysed reaction is N(6)-[(R)-lipoyl]-L-lysyl-[protein] + pyruvate + H(+) = N(6)-[(R)-S(8)-acetyldihydrolipoyl]-L-lysyl-[protein] + CO2. Its activity is regulated as follows. Activity of the E1 module is inhibited by the pyruvate dehydrogenase inhibitor PdhI. The pyruvate dehydrogenase complex catalyzes the overall conversion of pyruvate to acetyl-CoA and CO(2). It contains multiple copies of three enzymatic components: pyruvate dehydrogenase (E1), dihydrolipoamide acetyltransferase (E2) and lipoamide dehydrogenase (E3). Its function is as follows. The B.subtilis PDH complex also possesses branched-chain 2-oxoacid dehydrogenase (BCDH) activity. This chain is Pyruvate dehydrogenase E1 component subunit beta, found in Bacillus subtilis (strain 168).